Reading from the N-terminus, the 354-residue chain is Uroporphyrinogen decarboxylase (354 aa).

Residues arginine 27–arginine 31, phenylalanine 46, aspartate 77, tyrosine 153, threonine 208, and histidine 326 contribute to the substrate site.

Belongs to the uroporphyrinogen decarboxylase family. In terms of assembly, homodimer.

The protein resides in the cytoplasm. The catalysed reaction is uroporphyrinogen III + 4 H(+) = coproporphyrinogen III + 4 CO2. It participates in porphyrin-containing compound metabolism; protoporphyrin-IX biosynthesis; coproporphyrinogen-III from 5-aminolevulinate: step 4/4. Catalyzes the decarboxylation of four acetate groups of uroporphyrinogen-III to yield coproporphyrinogen-III. The polypeptide is Uroporphyrinogen decarboxylase (Neisseria meningitidis serogroup A / serotype 4A (strain DSM 15465 / Z2491)).